We begin with the raw amino-acid sequence, 382 residues long: 1-deoxy-D-xylulose 5-phosphate reductoisomerase (382 aa).

Threonine 10, glycine 11, serine 12, isoleucine 13, asparagine 38, and asparagine 120 together coordinate NADPH. Position 121 (lysine 121) interacts with 1-deoxy-D-xylulose 5-phosphate. NADPH is bound at residue glutamate 122. Aspartate 146 lines the Mn(2+) pocket. 1-deoxy-D-xylulose 5-phosphate contacts are provided by serine 147, glutamate 148, serine 172, and histidine 195. Position 148 (glutamate 148) interacts with Mn(2+). NADPH is bound at residue glycine 201. 4 residues coordinate 1-deoxy-D-xylulose 5-phosphate: serine 208, asparagine 213, lysine 214, and glutamate 217. Glutamate 217 is a binding site for Mn(2+).

This sequence belongs to the DXR family. Mg(2+) is required as a cofactor. Requires Mn(2+) as cofactor.

It carries out the reaction 2-C-methyl-D-erythritol 4-phosphate + NADP(+) = 1-deoxy-D-xylulose 5-phosphate + NADPH + H(+). The protein operates within isoprenoid biosynthesis; isopentenyl diphosphate biosynthesis via DXP pathway; isopentenyl diphosphate from 1-deoxy-D-xylulose 5-phosphate: step 1/6. Functionally, catalyzes the NADPH-dependent rearrangement and reduction of 1-deoxy-D-xylulose-5-phosphate (DXP) to 2-C-methyl-D-erythritol 4-phosphate (MEP). This Thermoanaerobacter sp. (strain X514) protein is 1-deoxy-D-xylulose 5-phosphate reductoisomerase.